Here is a 324-residue protein sequence, read N- to C-terminus: Glycerol-3-phosphate dehydrogenase [NAD(P)+] (324 aa).

Residues Trp-15, Arg-35, and Lys-101 each coordinate NADPH. Positions 101 and 129 each coordinate sn-glycerol 3-phosphate. Residue Ala-133 coordinates NADPH. Lys-184, Asp-237, Ser-247, Arg-248, and Asn-249 together coordinate sn-glycerol 3-phosphate. Residue Lys-184 is the Proton acceptor of the active site. Arg-248 contacts NADPH. NADPH-binding residues include Val-272 and Glu-274.

Belongs to the NAD-dependent glycerol-3-phosphate dehydrogenase family.

The protein resides in the cytoplasm. The enzyme catalyses sn-glycerol 3-phosphate + NAD(+) = dihydroxyacetone phosphate + NADH + H(+). It catalyses the reaction sn-glycerol 3-phosphate + NADP(+) = dihydroxyacetone phosphate + NADPH + H(+). Its pathway is membrane lipid metabolism; glycerophospholipid metabolism. In terms of biological role, catalyzes the reduction of the glycolytic intermediate dihydroxyacetone phosphate (DHAP) to sn-glycerol 3-phosphate (G3P), the key precursor for phospholipid synthesis. In Gluconobacter oxydans (strain 621H) (Gluconobacter suboxydans), this protein is Glycerol-3-phosphate dehydrogenase [NAD(P)+].